A 399-amino-acid polypeptide reads, in one-letter code: NADH-quinone oxidoreductase subunit D 2 (399 aa).

A disordered region spans residues 1–20 (MIASKESNSAATPATSAPTL). Low complexity predominate over residues 9 to 20 (SAATPATSAPTL).

This sequence belongs to the complex I 49 kDa subunit family. In terms of assembly, NDH-1 is composed of 14 different subunits. Subunits NuoB, C, D, E, F, and G constitute the peripheral sector of the complex.

The protein localises to the cell inner membrane. The catalysed reaction is a quinone + NADH + 5 H(+)(in) = a quinol + NAD(+) + 4 H(+)(out). Its function is as follows. NDH-1 shuttles electrons from NADH, via FMN and iron-sulfur (Fe-S) centers, to quinones in the respiratory chain. The immediate electron acceptor for the enzyme in this species is believed to be ubiquinone. Couples the redox reaction to proton translocation (for every two electrons transferred, four hydrogen ions are translocated across the cytoplasmic membrane), and thus conserves the redox energy in a proton gradient. The chain is NADH-quinone oxidoreductase subunit D 2 from Opitutus terrae (strain DSM 11246 / JCM 15787 / PB90-1).